The following is a 544-amino-acid chain: Chaperonin GroEL 3 (544 aa).

Residues 30-33 (TLGP), Lys-51, 87-91 (DGTTT), Gly-415, and Asp-495 each bind ATP.

It belongs to the chaperonin (HSP60) family. Forms a cylinder of 14 subunits composed of two heptameric rings stacked back-to-back. Interacts with the co-chaperonin GroES.

It is found in the cytoplasm. The enzyme catalyses ATP + H2O + a folded polypeptide = ADP + phosphate + an unfolded polypeptide.. Functionally, together with its co-chaperonin GroES, plays an essential role in assisting protein folding. The GroEL-GroES system forms a nano-cage that allows encapsulation of the non-native substrate proteins and provides a physical environment optimized to promote and accelerate protein folding. In Psychromonas ingrahamii (strain DSM 17664 / CCUG 51855 / 37), this protein is Chaperonin GroEL 3.